The sequence spans 572 residues: Proline--tRNA ligase (572 aa).

This sequence belongs to the class-II aminoacyl-tRNA synthetase family. ProS type 1 subfamily. As to quaternary structure, homodimer.

It localises to the cytoplasm. It catalyses the reaction tRNA(Pro) + L-proline + ATP = L-prolyl-tRNA(Pro) + AMP + diphosphate. In terms of biological role, catalyzes the attachment of proline to tRNA(Pro) in a two-step reaction: proline is first activated by ATP to form Pro-AMP and then transferred to the acceptor end of tRNA(Pro). As ProRS can inadvertently accommodate and process non-cognate amino acids such as alanine and cysteine, to avoid such errors it has two additional distinct editing activities against alanine. One activity is designated as 'pretransfer' editing and involves the tRNA(Pro)-independent hydrolysis of activated Ala-AMP. The other activity is designated 'posttransfer' editing and involves deacylation of mischarged Ala-tRNA(Pro). The misacylated Cys-tRNA(Pro) is not edited by ProRS. This Pectobacterium atrosepticum (strain SCRI 1043 / ATCC BAA-672) (Erwinia carotovora subsp. atroseptica) protein is Proline--tRNA ligase.